A 279-amino-acid polypeptide reads, in one-letter code: Borealin (279 aa).

Over residues 135–152 the composition is skewed to basic residues; sequence KTKAKVAAKKPSTARKTR. Residues 135 to 180 are disordered; sequence KTKAKVAAKKPSTARKTRASTANLTNTSKRTSKRGRATPSASKQIE. Residues 153-163 are compositionally biased toward polar residues; sequence ASTANLTNTSK.

Belongs to the borealin family. In terms of assembly, component of the CPC at least composed of survivin/birc5, incenp, cdca8/borealin and/or cdca9/dasra-A, and aurkb/aurora-B. Interacts with incenp (via N-terminus).

It localises to the nucleus. The protein resides in the chromosome. Its subcellular location is the centromere. The protein localises to the cytoplasm. It is found in the cytoskeleton. It localises to the spindle. Functionally, component of the chromosomal passenger complex (CPC), a complex that acts as a key regulator of mitosis. The CPC complex has essential functions at the centromere in ensuring correct chromosome alignment and segregation and is required for chromatin-induced microtubule stabilization and spindle assembly. Contributes to CPC function by facilitating loading of the CPC onto chromosomes. This is Borealin (cdca8) from Xenopus tropicalis (Western clawed frog).